A 309-amino-acid chain; its full sequence is D-alanine--D-alanine ligase (309 aa).

Positions 104–301 (KQIWQGSDLP…FDALCVEILA (198 aa)) constitute an ATP-grasp domain. ATP is bound at residue 130-185 (VASLGLPVIIKPVHEGSSIGMSKVEKIEDFAPAIEKATAHDAIVMAEKWITGREYT). Residues D255, E268, and N270 each contribute to the Mg(2+) site.

Belongs to the D-alanine--D-alanine ligase family. Requires Mg(2+) as cofactor. It depends on Mn(2+) as a cofactor.

Its subcellular location is the cytoplasm. It carries out the reaction 2 D-alanine + ATP = D-alanyl-D-alanine + ADP + phosphate + H(+). The protein operates within cell wall biogenesis; peptidoglycan biosynthesis. Cell wall formation. The chain is D-alanine--D-alanine ligase from Acinetobacter baylyi (strain ATCC 33305 / BD413 / ADP1).